Reading from the N-terminus, the 780-residue chain is MSKMPAKKKSCFQITSVTTAQVATSITEDTESLDDPDESRTEDVSSEIFDVSRATDYGPEEVCERSSSEETLNNVGDAETPGTVSPNLLLDGQLAAAAAAPANGGGVVSARSVSGALASTLAAAATSAPAPGAPGGPQLAGSSAGPVTAAPSQPPTTCSSRFRVIKLDHGSGEPYRRGRWTCMEYYERDSDSSVLTRSGDCIRHSSTFDQTAERDSGLGATGGSVVVVVASMQGAHGPESGTDSSLTAVSQLPPSEKMSQPTPAQPQSFSVGQPQPPPPPVGGAVAQSSAPLPPFPGAATGPQPMMAAAQPSQPQGAGPGGQTLPPTNVTLAQPAMSLPPQPGPAVGAPAAQQPQQFAYPQPQIPPGHLLPVQPSGQSEYLQQHVAGLQPPSPAQPSSTGAAASPATAATLPVGTGQNASSVGAQLMGASSQPSEAMAPRTGPAQGGQVAPCQPTGVPPATVGGVVQPCLGPAGAGQPQSVPPPQMGGSGPLSAVPGGPHAVVPGVPNVPAAVPAPSVPSVSTTSVTMPNVPAPLAQSQQLSSHTPVSRSSSIIQHVGLPLAPGTHSAPTSLPQSDLSQFQTQTQPLVGQVDDTRRKSEPLPQPPLSLIAENKPVVKPPVADSLANPLQLTPMNSLATSVFSIAIPVDGDEDRNPSTAFYQAFHLNTLKESKSLWDSASGGGVVAIDNKIEQAMDLVKSHLMYAVREEVEVLKEQIKELVERNSLLERENALLKSLSSNDQLSQLPTQQANPGSTSQQQAVIAQPPQPTQPPQQPNVSSA.

5 disordered regions span residues 20 to 86 (AQVA…TVSP), 126 to 158 (TSAP…PTTC), 235 to 499 (AHGP…PGGP), 587 to 607 (LVGQ…PPLS), and 736 to 780 (LSSN…VSSA). Positions 28–37 (EDTESLDDPD) are enriched in acidic residues. Residues 126 to 146 (TSAPAPGAPGGPQLAGSSAGP) show a composition bias toward low complexity. Residues 241 to 262 (GTDSSLTAVSQLPPSEKMSQPT) are compositionally biased toward polar residues. Low complexity-rich tracts occupy residues 297–316 (GAAT…QPQG), 344–361 (PAVG…AYPQ), and 395–412 (QPSS…ATLP). A compositionally biased stretch (polar residues) spans 415 to 434 (TGQNASSVGAQLMGASSQPS). Residues 453–468 (QPTGVPPATVGGVVQP) show a composition bias toward low complexity. Over residues 736-756 (LSSNDQLSQLPTQQANPGSTS) the composition is skewed to polar residues. Residues 765–774 (PPQPTQPPQQ) are compositionally biased toward pro residues.

This sequence belongs to the TSC-22/Dip/Bun family. In terms of assembly, interacts with NRBP1. Interacts with PKM isoform M2; the interaction results in reduced nuclear levels of PKM isoform M2, leading to repression of cyclin CCND1 transcription and reduced cell growth. Interacts with WDR77.

Functionally, reduces the level of nuclear PKM isoform M2 which results in repression of cyclin CCND1 transcription and reduced cell growth. The sequence is that of TSC22 domain family protein 2 from Homo sapiens (Human).